A 558-amino-acid polypeptide reads, in one-letter code: Acylase ACY 1 proenzyme (558 aa).

Thr368 (nucleophile) is an active-site residue.

The protein belongs to the gamma-glutamyltransferase family. In terms of assembly, dimer of two non-identical chains processed from the same precursor.

It catalyses the reaction (7R)-7-(4-carboxybutanamido)cephalosporanate + H2O = (7R)-7-aminocephalosporanate + glutarate. The catalysed reaction is an N-terminal (5-L-glutamyl)-[peptide] + an alpha-amino acid = 5-L-glutamyl amino acid + an N-terminal L-alpha-aminoacyl-[peptide]. The enzyme catalyses glutathione + H2O = L-cysteinylglycine + L-glutamate. It carries out the reaction an S-substituted glutathione + H2O = an S-substituted L-cysteinylglycine + L-glutamate. Its function is as follows. Besides the cephalosporin acylase I activity which converts GL-7ACA into 7-ACA; this enzyme displays some gamma glutamyltranspeptidase activity. The chain is Acylase ACY 1 proenzyme (acyI) from Pseudomonas sp. (strain SE83).